The sequence spans 358 residues: Uroporphyrinogen decarboxylase (358 aa).

Substrate is bound by residues 28–32 (RQAGR), D78, Y154, S208, and H324.

Belongs to the uroporphyrinogen decarboxylase family. In terms of assembly, homodimer.

It localises to the cytoplasm. The catalysed reaction is uroporphyrinogen III + 4 H(+) = coproporphyrinogen III + 4 CO2. The protein operates within porphyrin-containing compound metabolism; protoporphyrin-IX biosynthesis; coproporphyrinogen-III from 5-aminolevulinate: step 4/4. In terms of biological role, catalyzes the decarboxylation of four acetate groups of uroporphyrinogen-III to yield coproporphyrinogen-III. The sequence is that of Uroporphyrinogen decarboxylase from Acidiphilium cryptum (strain JF-5).